A 335-amino-acid polypeptide reads, in one-letter code: Delta(7)-sterol 5(6)-desaturase erg3B (335 aa).

3 helical membrane passes run 74–94, 113–133, and 152–172; these read IWAF…ALVF, IGQA…LFLA, and LYTY…IYWI. One can recognise a Fatty acid hydroxylase domain in the interval 160–284; that stretch reads LFIAFTDFAI…FITFWDRIGG (125 aa). Residues 173–177 carry the Histidine box-1 motif; that stretch reads HRGLH. The Histidine box-2 signature appears at 186-190; sequence HKPHH. The chain crosses the membrane as a helical span at residues 219 to 239; it reads PFLFPLQKAAYLGLFVFVTIW. An N-linked (GlcNAc...) asparagine glycan is attached at N256. The Histidine box-3 motif lies at 261 to 265; it reads HTIHH.

It belongs to the sterol desaturase family. It depends on Fe cation as a cofactor.

The protein localises to the endoplasmic reticulum membrane. It participates in steroid metabolism; ergosterol biosynthesis. Its function is as follows. Delta(7)-sterol 5(6)-desaturase; part of the third module of ergosterol biosynthesis pathway that includes the late steps of the pathway. Erg3B catalyzes the introduction of a C-5 double bond in the B ring to produce 5-dehydroepisterol. The third module or late pathway involves the ergosterol synthesis itself through consecutive reactions that mainly occur in the endoplasmic reticulum (ER) membrane. Firstly, the squalene synthase erg9 catalyzes the condensation of 2 farnesyl pyrophosphate moieties to form squalene, which is the precursor of all steroids. Squalene synthase is crucial for balancing the incorporation of farnesyl diphosphate (FPP) into sterol and nonsterol isoprene synthesis. Secondly, squalene is converted into lanosterol by the consecutive action of the squalene epoxidase erg1 and the lanosterol synthase erg7. Then, the delta(24)-sterol C-methyltransferase erg6 methylates lanosterol at C-24 to produce eburicol. Eburicol is the substrate of the sterol 14-alpha demethylase encoded by cyp51A and cyp51B, to yield 4,4,24-trimethyl ergosta-8,14,24(28)-trienol. The C-14 reductase erg24 then reduces the C14=C15 double bond which leads to 4,4-dimethylfecosterol. A sequence of further demethylations at C-4, involving the C-4 demethylation complex containing the C-4 methylsterol oxidases erg25A or erg25B, the sterol-4-alpha-carboxylate 3-dehydrogenase erg26 and the 3-keto-steroid reductase erg27, leads to the production of fecosterol via 4-methylfecosterol. The C-8 sterol isomerase erg2 then catalyzes the reaction which results in unsaturation at C-7 in the B ring of sterols and thus converts fecosterol to episterol. The sterol-C5-desaturase erg3B then catalyzes the introduction of a C-5 double bond in the B ring to produce 5-dehydroepisterol. The 2 other sterol-C5-desaturases, erg3A and erg3C, seem to be less important in ergosterol biosynthesis. The C-22 sterol desaturase erg5 further converts 5-dehydroepisterol into ergosta-5,7,22,24(28)-tetraen-3beta-ol by forming the C-22(23) double bond in the sterol side chain. Finally, ergosta-5,7,22,24(28)-tetraen-3beta-ol is substrate of the C-24(28) sterol reductases erg4A and erg4B to produce ergosterol. Possible alternative sterol biosynthetic pathways might exist from fecosterol to ergosterol, depending on the activities of the erg3 isoforms. The polypeptide is Delta(7)-sterol 5(6)-desaturase erg3B (Aspergillus fumigatus (strain ATCC MYA-4609 / CBS 101355 / FGSC A1100 / Af293) (Neosartorya fumigata)).